The sequence spans 404 residues: Glutamyl-tRNA reductase (404 aa).

Residues 47–50 (TCNR), Ser-94, 99–101 (EQE), and Gln-105 contribute to the substrate site. Cys-48 functions as the Nucleophile in the catalytic mechanism. 174-179 (GAGEMG) is a binding site for NADP(+).

As to quaternary structure, homotetramer.

The enzyme catalyses (S)-4-amino-5-oxopentanoate + tRNA(Glu) + NADP(+) = L-glutamyl-tRNA(Glu) + NADPH + H(+). Its pathway is porphyrin-containing compound metabolism; protoporphyrin-IX biosynthesis; 5-aminolevulinate from L-glutamyl-tRNA(Glu): step 1/2. Inhibited by heavy metal compounds, Zn(2+), and heme. Also competitively inhibited by glutamycin. Its function is as follows. Catalyzes the NADPH-dependent reduction of glutamyl-tRNA(Glu) to glutamate 1-semialdehyde (GSA). In the absence of NADPH, exhibits substrate esterase activity, leading to the release of glutamate from tRNA. The protein is Glutamyl-tRNA reductase (hemA) of Methanopyrus kandleri (strain AV19 / DSM 6324 / JCM 9639 / NBRC 100938).